The primary structure comprises 294 residues: Glycine--tRNA ligase alpha subunit (294 aa).

It belongs to the class-II aminoacyl-tRNA synthetase family. Tetramer of two alpha and two beta subunits.

The protein resides in the cytoplasm. It catalyses the reaction tRNA(Gly) + glycine + ATP = glycyl-tRNA(Gly) + AMP + diphosphate. This chain is Glycine--tRNA ligase alpha subunit, found in Lawsonia intracellularis (strain PHE/MN1-00).